Here is a 124-residue protein sequence, read N- to C-terminus: Large ribosomal subunit protein uL14 (124 aa).

The protein belongs to the universal ribosomal protein uL14 family. In terms of assembly, part of the 50S ribosomal subunit. Forms a cluster with proteins L3 and L19. In the 70S ribosome, L14 and L19 interact and together make contacts with the 16S rRNA in bridges B5 and B8.

Binds to 23S rRNA. Forms part of two intersubunit bridges in the 70S ribosome. The sequence is that of Large ribosomal subunit protein uL14 from Clostridium novyi (strain NT).